The sequence spans 259 residues: 5'-nucleotidase SurE 1 (259 aa).

Residues Asp-16, Asp-17, Ser-48, and Asn-101 each coordinate a divalent metal cation.

Belongs to the SurE nucleotidase family. A divalent metal cation is required as a cofactor.

It localises to the cytoplasm. It carries out the reaction a ribonucleoside 5'-phosphate + H2O = a ribonucleoside + phosphate. In terms of biological role, nucleotidase that shows phosphatase activity on nucleoside 5'-monophosphates. This chain is 5'-nucleotidase SurE 1, found in Burkholderia lata (strain ATCC 17760 / DSM 23089 / LMG 22485 / NCIMB 9086 / R18194 / 383).